Reading from the N-terminus, the 205-residue chain is Shieldin complex subunit 1 (205 aa).

As to quaternary structure, component of the shieldin complex, consisting of SHLD1, SHLD2, SHLD3 and MAD2L2/REV7. Within the complex, SHLD2 forms a scaffold which interacts with a SHLD3-MAD2L2 subcomplex via its N-terminus, and with SHLD1 via its C-terminus. Interacts with ASTE1.

It is found in the chromosome. Functionally, component of the shieldin complex, which plays an important role in repair of DNA double-stranded breaks (DSBs). During G1 and S phase of the cell cycle, the complex functions downstream of TP53BP1 to promote non-homologous end joining (NHEJ) and suppress DNA end resection. Mediates various NHEJ-dependent processes including immunoglobulin class-switch recombination, and fusion of unprotected telomeres. The chain is Shieldin complex subunit 1 from Homo sapiens (Human).